Here is a 205-residue protein sequence, read N- to C-terminus: N-(5'-phosphoribosyl)anthranilate isomerase (205 aa).

It belongs to the TrpF family.

It carries out the reaction N-(5-phospho-beta-D-ribosyl)anthranilate = 1-(2-carboxyphenylamino)-1-deoxy-D-ribulose 5-phosphate. It participates in amino-acid biosynthesis; L-tryptophan biosynthesis; L-tryptophan from chorismate: step 3/5. In Maridesulfovibrio salexigens (strain ATCC 14822 / DSM 2638 / NCIMB 8403 / VKM B-1763) (Desulfovibrio salexigens), this protein is N-(5'-phosphoribosyl)anthranilate isomerase.